The sequence spans 597 residues: uncharacterized protein (597 aa).

The Helicase ATP-binding domain maps to 48–198; it reads LHPYNPYSSL…DSILSLTKET (151 aa). Residue 61–68 participates in ATP binding; that stretch reads YDVGLGKT. The DEVH box signature appears at 146-149; it reads DEVH. Positions 275-467 constitute a Helicase C-terminal domain; that stretch reads KINAFINSIK…DIPKIDNEMV (193 aa).

Belongs to the helicase family.

Functionally, the presence of the two linear plasmids, termed pGKL1 and pGKL2, in strains of Kluyveromyces lactis confers the killer phenotype to the host cell, by promoting the secretion of a toxin able to inhibit the growth of sensitive strains. This is an uncharacterized protein from Kluyveromyces lactis (strain ATCC 8585 / CBS 2359 / DSM 70799 / NBRC 1267 / NRRL Y-1140 / WM37) (Yeast).